The following is a 704-amino-acid chain: Phosphoribosylformylglycinamidine synthase subunit PurL (704 aa).

Residue histidine 32 is part of the active site. Tyrosine 35 provides a ligand contact to ATP. Glutamate 76 lines the Mg(2+) pocket. Residues 77-80 and arginine 99 contribute to the substrate site; that span reads SHNH. Catalysis depends on histidine 78, which acts as the Proton acceptor. Residue aspartate 100 coordinates Mg(2+). Glutamine 224 contacts substrate. Aspartate 252 contributes to the Mg(2+) binding site. 296 to 298 contacts substrate; it reads ESQ. Aspartate 471 and glycine 508 together coordinate ATP. Asparagine 509 contributes to the Mg(2+) binding site. Serine 511 contacts substrate.

Belongs to the FGAMS family. Monomer. Part of the FGAM synthase complex composed of 1 PurL, 1 PurQ and 2 PurS subunits.

It is found in the cytoplasm. It carries out the reaction N(2)-formyl-N(1)-(5-phospho-beta-D-ribosyl)glycinamide + L-glutamine + ATP + H2O = 2-formamido-N(1)-(5-O-phospho-beta-D-ribosyl)acetamidine + L-glutamate + ADP + phosphate + H(+). It participates in purine metabolism; IMP biosynthesis via de novo pathway; 5-amino-1-(5-phospho-D-ribosyl)imidazole from N(2)-formyl-N(1)-(5-phospho-D-ribosyl)glycinamide: step 1/2. Part of the phosphoribosylformylglycinamidine synthase complex involved in the purines biosynthetic pathway. Catalyzes the ATP-dependent conversion of formylglycinamide ribonucleotide (FGAR) and glutamine to yield formylglycinamidine ribonucleotide (FGAM) and glutamate. The FGAM synthase complex is composed of three subunits. PurQ produces an ammonia molecule by converting glutamine to glutamate. PurL transfers the ammonia molecule to FGAR to form FGAM in an ATP-dependent manner. PurS interacts with PurQ and PurL and is thought to assist in the transfer of the ammonia molecule from PurQ to PurL. In Pyrococcus furiosus (strain ATCC 43587 / DSM 3638 / JCM 8422 / Vc1), this protein is Phosphoribosylformylglycinamidine synthase subunit PurL.